The following is an 876-amino-acid chain: Senescence-induced receptor-like serine/threonine-protein kinase (876 aa).

The first 24 residues, methionine 1 to alanine 24, serve as a signal peptide directing secretion. Over glutamine 25–glycine 517 the chain is Extracellular. LRR repeat units follow at residues arginine 415 to threonine 438, serine 439 to proline 462, and asparagine 463 to histidine 483. The helical transmembrane segment at tyrosine 518 to phenylalanine 538 threads the bilayer. The Cytoplasmic segment spans residues arginine 539–arginine 876. The 274-residue stretch at asparagine 574–tyrosine 847 folds into the Protein kinase domain. Residues isoleucine 580–valine 588 and lysine 601 contribute to the ATP site. Tyrosine 646 carries the phosphotyrosine modification. The active-site Proton acceptor is the aspartate 697. Position 731 is a phosphoserine (serine 731). A Phosphothreonine modification is found at threonine 732. Tyrosine 745 is subject to Phosphotyrosine.

This sequence belongs to the protein kinase superfamily. Ser/Thr protein kinase family.

Its subcellular location is the membrane. Functionally, involved in innate immune response of plants. The polypeptide is Senescence-induced receptor-like serine/threonine-protein kinase (SIRK) (Arabidopsis thaliana (Mouse-ear cress)).